Consider the following 241-residue polypeptide: Golgi-associated RAB2 interactor protein 6 (241 aa).

The protein belongs to the GARIN family.

This Homo sapiens (Human) protein is Golgi-associated RAB2 interactor protein 6.